Consider the following 287-residue polypeptide: MMKNILAIQSHVVYGHAGNSAAEFPMRRLGANVWPLNTVQFSNHTQYGKWTGCVMPPSHLTEIVQGIAAIDKLHTCDAVLSGYLGSAEQGEHILGIVRQVKAANPQAKYFCDPVMGHPEKGCIVAPGVAEFHVRHGLPASDIIAPNLVELEILCEHAVNNVEEAVLAARELIAQGPQIVLVKHLARAGYSRDRFEMLLVTADEAWHISRPLVDFGMRQPVGVGDVTSGLLLVKLLQGATLQEALEHVTAAVYEIMVTTKAMQEYELQVVAAQDRIAKPEHYFSATKL.

Substrate contacts are provided by residues S10 and 45 to 46; that span reads TQ. Residues D112, A144, E149, K182, and 209–212 contribute to the ATP site; that span reads RPLV. A substrate-binding site is contributed by D224.

This sequence belongs to the pyridoxine kinase family. PdxY subfamily. Homodimer. Mg(2+) is required as a cofactor.

The catalysed reaction is pyridoxal + ATP = pyridoxal 5'-phosphate + ADP + H(+). It participates in cofactor metabolism; pyridoxal 5'-phosphate salvage; pyridoxal 5'-phosphate from pyridoxal: step 1/1. Pyridoxal kinase involved in the salvage pathway of pyridoxal 5'-phosphate (PLP). Catalyzes the phosphorylation of pyridoxal to PLP. The chain is Pyridoxal kinase PdxY from Shigella boydii serotype 4 (strain Sb227).